Consider the following 404-residue polypeptide: RNA exonuclease 3 (404 aa).

The Exonuclease domain occupies 243-389 (VLSLDCEMAF…QDAIATMDVV (147 aa)).

It belongs to the REXO1/REXO3 family.

It is found in the cytoplasm. The protein localises to the nucleus. 3' to 5' exoribonuclease required for proper 3' end maturation of MRP RNA and of the U5L snRNA. In Saccharomyces cerevisiae (strain ATCC 204508 / S288c) (Baker's yeast), this protein is RNA exonuclease 3 (REX3).